Reading from the N-terminus, the 302-residue chain is MRDYSKEIKSWAAELGFDFCGISAADFLEEEAPRLERWLNRNYHGKMAYMANHFDKRLDPRKLVDGAKSVVSLLLNYYPEEPLDASPYKISKYAYGKDYHYVIKDKLKLLFERIQKEIGEVGGRIFVDSAPVMDKIWAKKAGLGWVGKNSNLINRKMGSFFFIAELILDLPLQADGPIRDYCGTCTACIDACPTDAITPYEVDGSKCISYLTIELKDQIPNEFKGKMENWIFGCDICQDVCPWNSFARPHSTEEFYPNENLKTFQDWDEITSEIFSHLFKKSAVERTKLEGLKRNIAFVKEV.

The Proton donor role is filled by Asp-128. Positions 170–202 (LPLQADGPIRDYCGTCTACIDACPTDAITPYEV) constitute a 4Fe-4S ferredoxin-type 1 domain. 8 residues coordinate [4Fe-4S] cluster: Cys-182, Cys-185, Cys-188, Cys-192, Cys-207, Cys-234, Cys-237, and Cys-241. Residues 221–251 (NEFKGKMENWIFGCDICQDVCPWNSFARPHS) enclose the 4Fe-4S ferredoxin-type 2 domain.

The protein belongs to the QueG family. Monomer. The cofactor is cob(II)alamin. [4Fe-4S] cluster is required as a cofactor.

It is found in the cytoplasm. It catalyses the reaction epoxyqueuosine(34) in tRNA + AH2 = queuosine(34) in tRNA + A + H2O. The protein operates within tRNA modification; tRNA-queuosine biosynthesis. In terms of biological role, catalyzes the conversion of epoxyqueuosine (oQ) to queuosine (Q), which is a hypermodified base found in the wobble positions of tRNA(Asp), tRNA(Asn), tRNA(His) and tRNA(Tyr). The sequence is that of Epoxyqueuosine reductase from Leadbetterella byssophila (strain DSM 17132 / JCM 16389 / KACC 11308 / NBRC 106382 / 4M15).